Reading from the N-terminus, the 400-residue chain is Na(+)/H(+) antiporter NhaA (400 aa).

Helical transmembrane passes span 9–29 (FLVS…IAMV), 60–80 (LILW…GLEL), 96–116 (VLPA…FYLF), 127–147 (WAIP…ILGA), 155–175 (IFLV…MAIF), 180–200 (LSLI…ALNL), 210–230 (LILG…ATLA), 263–283 (YFVL…GIGL), 294–314 (VILG…FVAI), 327–347 (WISF…SLFI), and 366–386 (VLIA…IASV).

This sequence belongs to the NhaA Na(+)/H(+) (TC 2.A.33) antiporter family.

The protein localises to the cell inner membrane. It carries out the reaction Na(+)(in) + 2 H(+)(out) = Na(+)(out) + 2 H(+)(in). In terms of biological role, na(+)/H(+) antiporter that extrudes sodium in exchange for external protons. The protein is Na(+)/H(+) antiporter NhaA of Campylobacter curvus (strain 525.92).